Here is a 176-residue protein sequence, read N- to C-terminus: ATP synthase subunit b (176 aa).

Residues 27–47 traverse the membrane as a helical segment; it reads FFVFSFLTLILVVTIVTLLVY.

The protein belongs to the ATPase B chain family. In terms of assembly, F-type ATPases have 2 components, F(1) - the catalytic core - and F(0) - the membrane proton channel. F(1) has five subunits: alpha(3), beta(3), gamma(1), delta(1), epsilon(1). F(0) has three main subunits: a(1), b(2) and c(10-14). The alpha and beta chains form an alternating ring which encloses part of the gamma chain. F(1) is attached to F(0) by a central stalk formed by the gamma and epsilon chains, while a peripheral stalk is formed by the delta and b chains.

The protein resides in the cell membrane. In terms of biological role, f(1)F(0) ATP synthase produces ATP from ADP in the presence of a proton or sodium gradient. F-type ATPases consist of two structural domains, F(1) containing the extramembraneous catalytic core and F(0) containing the membrane proton channel, linked together by a central stalk and a peripheral stalk. During catalysis, ATP synthesis in the catalytic domain of F(1) is coupled via a rotary mechanism of the central stalk subunits to proton translocation. Its function is as follows. Component of the F(0) channel, it forms part of the peripheral stalk, linking F(1) to F(0). In Metamycoplasma arthritidis (strain 158L3-1) (Mycoplasma arthritidis), this protein is ATP synthase subunit b.